Reading from the N-terminus, the 572-residue chain is Proline--tRNA ligase (572 aa).

It belongs to the class-II aminoacyl-tRNA synthetase family. ProS type 1 subfamily. As to quaternary structure, homodimer.

It localises to the cytoplasm. The enzyme catalyses tRNA(Pro) + L-proline + ATP = L-prolyl-tRNA(Pro) + AMP + diphosphate. Catalyzes the attachment of proline to tRNA(Pro) in a two-step reaction: proline is first activated by ATP to form Pro-AMP and then transferred to the acceptor end of tRNA(Pro). As ProRS can inadvertently accommodate and process non-cognate amino acids such as alanine and cysteine, to avoid such errors it has two additional distinct editing activities against alanine. One activity is designated as 'pretransfer' editing and involves the tRNA(Pro)-independent hydrolysis of activated Ala-AMP. The other activity is designated 'posttransfer' editing and involves deacylation of mischarged Ala-tRNA(Pro). The misacylated Cys-tRNA(Pro) is not edited by ProRS. In Salmonella newport (strain SL254), this protein is Proline--tRNA ligase.